The sequence spans 257 residues: Molybdate-binding protein ModA (257 aa).

A signal peptide spans 1–24; the sequence is MARKWLNLFAGAALSFAVAGNALA. Molybdate contacts are provided by S36, S63, A149, V176, and Y194.

It belongs to the bacterial solute-binding protein ModA family. In terms of assembly, the complex is composed of two ATP-binding proteins (ModC), two transmembrane proteins (ModB) and a solute-binding protein (ModA).

The protein resides in the periplasm. Functionally, part of the ABC transporter complex ModABC involved in the transport of molybdenum into the cell. Binds molybdate with high affinity in vitro and with a similar affinity in vivo. Binds tungstate with high affinity in vitro. Binds unnatural anion perrhenate with high affinity in vitro. Does not bind sulfate, phosphate, arsenate, selenate, chlorate, metavanadate, nitrate, perchlorate, permanganate or carbonate. This chain is Molybdate-binding protein ModA (modA), found in Escherichia coli (strain K12).